The sequence spans 235 residues: Small ribosomal subunit protein eS6 (235 aa).

Residues 190 to 212 (GFHPRERGERRRKSVRGRMIPDP) are disordered.

Belongs to the eukaryotic ribosomal protein eS6 family.

This chain is Small ribosomal subunit protein eS6, found in Aeropyrum pernix (strain ATCC 700893 / DSM 11879 / JCM 9820 / NBRC 100138 / K1).